The primary structure comprises 165 residues: Ribosome maturation factor RimM (165 aa).

The PRC barrel domain maps to Glu-94–Ala-165.

It belongs to the RimM family. Binds ribosomal protein uS19.

The protein localises to the cytoplasm. Its function is as follows. An accessory protein needed during the final step in the assembly of 30S ribosomal subunit, possibly for assembly of the head region. Essential for efficient processing of 16S rRNA. May be needed both before and after RbfA during the maturation of 16S rRNA. It has affinity for free ribosomal 30S subunits but not for 70S ribosomes. The polypeptide is Ribosome maturation factor RimM (Rickettsia rickettsii (strain Sheila Smith)).